The following is a 156-amino-acid chain: Small ribosomal subunit protein uS7 (156 aa).

The protein belongs to the universal ribosomal protein uS7 family. In terms of assembly, part of the 30S ribosomal subunit. Contacts proteins S9 and S11.

Its function is as follows. One of the primary rRNA binding proteins, it binds directly to 16S rRNA where it nucleates assembly of the head domain of the 30S subunit. Is located at the subunit interface close to the decoding center, probably blocks exit of the E-site tRNA. The protein is Small ribosomal subunit protein uS7 of Hahella chejuensis (strain KCTC 2396).